Consider the following 291-residue polypeptide: ATP synthase gamma chain (291 aa).

It belongs to the ATPase gamma chain family. In terms of assembly, F-type ATPases have 2 components, CF(1) - the catalytic core - and CF(0) - the membrane proton channel. CF(1) has five subunits: alpha(3), beta(3), gamma(1), delta(1), epsilon(1). CF(0) has three main subunits: a, b and c.

The protein localises to the cell inner membrane. In terms of biological role, produces ATP from ADP in the presence of a proton gradient across the membrane. The gamma chain is believed to be important in regulating ATPase activity and the flow of protons through the CF(0) complex. The protein is ATP synthase gamma chain of Variovorax paradoxus (strain S110).